The following is a 331-amino-acid chain: MRFRFGVVVPPAVAGARPELLVVGSRPELGRWEPRGAVRLRPAGTAAGDGALALQEPGLWLGEVELAAEEAAQDGAEPGRVDTFWYKFLKREPGGELSWEGNGPHHDRCCTYNENNLVDGVYCLPIGHWIEATGHTNEMKHTTDFYFNIAGHQAMHYSRILPNIWLGSCPRQVEHVTIKLKHELGITAVMNFQTEWDIVQNSSGCNRYPEPMTPDTMIKLYREEGLAYIWMPTPDMSTEGRVQMLPQAVCLLHALLEKGHIVYVHCNAGVGRSTAAVCGWLQYVMGWNLRKVQYFLMAKRPAVYIDEEALARAQEDFFQKFGKVRSSVCSL.

The CBM20 domain occupies 1-124 (MRFRFGVVVP…NNLVDGVYCL (124 aa)). The residue at position 25 (Ser25) is a Phosphoserine; by AMPK. Substrate is bound by residues Trp32, Lys87, 103–107 (GPHHD), Asp197, Asp235, and Arg241. In terms of domain architecture, Tyrosine-protein phosphatase spans 156-323 (HYSRILPNIW…QEDFFQKFGK (168 aa)). Cys266 serves as the catalytic Phosphocysteine intermediate. Residues 266–272 (CNAGVGR) carry the Glucan phosphatase signature motif CXAGXGR motif. Substrate-binding positions include 267-272 (NAGVGR) and Tyr304.

The protein belongs to the protein-tyrosine phosphatase family. Homodimer. Interacts with itself. Interacts with PPP1R3B, PPP1R3C, PPP1R3D, HIRIP5, and EPM2AIP1. Binds glycogen and Lafora bodies. Interacts with NHLRC1/malin (via the NHL repeats). Forms a complex with NHLRC1/malin and HSP70. Interacts with PPP1R3D; in the presence of NHLC1/malin the interaction leads to ubiquitination and autophagic degradation of PPP1R3D. Interacts (via the phosphatase domain) with MAPT/Tau; the interaction dephosphorylates MAPT. Isoform 1 and isoform 2 interact to form a heterodimeric complex that lacks phosphatase activity (in vitro). Active phosphatase isoform 7 and isoform 1 interact with each other, but give rise to lower phosphatase activity than isoform 1 or isoform 7 by themselves (in vitro). Active phosphatase isoform 7 and inactive isoform 2 interact with each other, but give rise to lower phosphatase activity than isoform 7 by itself (in vitro). Interacts with PRDM8. Post-translationally, polyubiquitinated by NHLRC1/malin. Phosphorylation on Ser-25 by AMPK affects the phosphatase activity of the enzyme and its ability to homodimerize and interact with NHLRC1, PPP1R3C or PRKAA2. Expressed in heart, skeletal muscle, kidney, pancreas and brain. Isoform 4 is also expressed in the placenta.

It localises to the cytoplasm. It is found in the endoplasmic reticulum membrane. The protein resides in the cell membrane. The protein localises to the nucleus. The catalysed reaction is O-phospho-L-tyrosyl-[protein] + H2O = L-tyrosyl-[protein] + phosphate. The enzyme catalyses O-phospho-L-seryl-[protein] + H2O = L-seryl-[protein] + phosphate. It catalyses the reaction O-phospho-L-threonyl-[protein] + H2O = L-threonyl-[protein] + phosphate. Its function is as follows. Plays an important role in preventing glycogen hyperphosphorylation and the formation of insoluble aggregates, via its activity as glycogen phosphatase, and by promoting the ubiquitination of proteins involved in glycogen metabolism via its interaction with the E3 ubiquitin ligase NHLRC1/malin. Shows strong phosphatase activity towards complex carbohydrates in vitro, avoiding glycogen hyperphosphorylation which is associated with reduced branching and formation of insoluble aggregates. Dephosphorylates phosphotyrosine and synthetic substrates, such as para-nitrophenylphosphate (pNPP), and has low activity with phosphoserine and phosphothreonine substrates (in vitro). Has been shown to dephosphorylate MAPT. Forms a complex with NHLRC1/malin and HSP70, which suppresses the cellular toxicity of misfolded proteins by promoting their degradation through the ubiquitin-proteasome system (UPS). Acts as a scaffold protein to facilitate PPP1R3C/PTG ubiquitination by NHLRC1/malin. Also promotes proteasome-independent protein degradation through the macroautophagy pathway. Does not bind to glycogen. Lacks phosphatase activity and might function as a dominant-negative regulator for the phosphatase activity of isoform 1 and isoform 7. In terms of biological role, has phosphatase activity (in vitro). This is Laforin (EPM2A) from Homo sapiens (Human).